We begin with the raw amino-acid sequence, 1040 residues long: MQVLPPGRTGGPSRLFIMRPVATTLLMVAILLAGIIGYRFLPVSALPEVDYPTIQVVTLYPGASPDVVTSAITAPLERQFGQMSGLKQMSSQSSGGASVVTLQFQLTLPLDVAEQEVQAAINAATNLLPSDLPNPPVYSKVNPADPPIMTLAVTSSAIPMTQVEDMVETRVAQKISQVSGVGLVTLAGGQRPAVRVKLNAQAIAALGLTSETVRTAITSANVNSAKGSLDGPARAVTLSANDQMQSAEDYRRLIIAYQNGAPIRLGDVASVEQGAENSWLGAWANQQRAIVMNVQRQPGANIIDTADSIRQMLPQLTESLPKSVKVQVLSDRTTNIRASVRDTQFELMLAIALVVMIIYLFLRNVPATIIPGVAVPLSLVGTFAVMVFLDFSINNLTLMALTIATGFVVDDAIVVIENISRYIEKGEKPLAAALKGAGEIGFTIISLTFSLIAVLIPLLFMGDIVGRLFREFAVTLAVAILISAVVSLTLTPMMCARMLSHESLRKQNRFSRASERFFERVIAVYGRWLSRVLNHPWLTLGVALSTLALSIILWVFIPKGFFPIQDNGIIQGTLQAPQSVSFASMAERQRQVASIILKDPAVESLTSFVGVDGTNPALNSARLQINLKPLDERDDRVQTVISRLQQAVDGVPGVALYLQPTQDLTIDTTVSRTQYQFTLQANSLEALSTWVPPLLSRLQAQPQLADVSSDWQDKGLAAYIKVDRDSASRLGISMADVDNALYNAFGQRLISTIYTQANQYRVVLEQDTEATPGLAALDNIRLTSSDGGIVPLTAIATVEQRFTPLSVNHLDQFPVTTISFNVPDNYSLGEAVDAILAAEQSLDFPTDIRTQFQGSSLAFQSALGSTVWLVVAAVVAMYIVLGVLYESFIHPITILSTLPTAGVGALLALWLAGSELDVIAIIGIILLIGIVKKNAIMMIDFALAAEREQGMPPREAIYQACLLRFRPILMTTLAALLGALPLMLSTGVGAELRRPLGIGMVGGLMLSQVLTLFTTPVIYLLFDRLSLHLKRRFPRQEEEA.

12 consecutive transmembrane segments (helical) span residues 16–36, 342–362, 369–389, 396–416, 440–460, 472–492, 537–557, 863–883, 888–908, 911–931, 968–988, and 998–1018; these read FIMRPVATTLLMVAILLAGII, DTQFELMLAIALVVMIIYLFL, IIPGVAVPLSLVGTFAVMVFL, LTLMALTIATGFVVDDAIVVI, IGFTIISLTFSLIAVLIPLLF, FAVTLAVAILISAVVSLTLTP, WLTLGVALSTLALSIILWVFI, LGSTVWLVVAAVVAMYIVLGV, FIHPITILSTLPTAGVGALLA, LAGSELDVIAIIGIILLIGIV, ILMTTLAALLGALPLMLSTGV, and IGMVGGLMLSQVLTLFTTPVI.

It belongs to the resistance-nodulation-cell division (RND) (TC 2.A.6) family. MdtB subfamily. Part of a tripartite efflux system composed of MdtA, MdtB and MdtC. MdtB forms a heteromultimer with MdtC.

Its subcellular location is the cell inner membrane. The protein is Multidrug resistance protein MdtB of Klebsiella pneumoniae (strain 342).